Consider the following 155-residue polypeptide: Anaerobic ribonucleoside-triphosphate reductase-activating protein (155 aa).

Positions 26, 30, and 33 each coordinate [4Fe-4S] cluster. S-adenosyl-L-methionine is bound by residues 32–34 (GCY) and Gly-74.

It belongs to the organic radical-activating enzymes family. In terms of assembly, forms a tetramer composed of two NrdD and two NrdG subunits. The cofactor is [4Fe-4S] cluster.

It localises to the cytoplasm. It catalyses the reaction glycyl-[protein] + reduced [flavodoxin] + S-adenosyl-L-methionine = glycin-2-yl radical-[protein] + semiquinone [flavodoxin] + 5'-deoxyadenosine + L-methionine + H(+). In terms of biological role, activation of anaerobic ribonucleoside-triphosphate reductase under anaerobic conditions by generation of an organic free radical, using S-adenosylmethionine and reduced flavodoxin as cosubstrates to produce 5'-deoxy-adenosine. The polypeptide is Anaerobic ribonucleoside-triphosphate reductase-activating protein (nrdG) (Vibrio cholerae serotype O1 (strain ATCC 39315 / El Tor Inaba N16961)).